A 146-amino-acid polypeptide reads, in one-letter code: Snake venom vascular endothelial growth factor toxin (146 aa).

The N-terminal stretch at 1 to 24 (MAVYLLAVAILFCIQGWPLGTVQG) is a signal peptide. At Gln25 the chain carries Pyrrolidone carboxylic acid. 3 disulfide bridges follow: Cys38–Cys80, Cys69–Cys115, and Cys73–Cys117. Residues 118–146 (RPRSASGVNSRKHKRNPEEGEPRAKFPFV) are disordered. A compositionally biased stretch (basic and acidic residues) spans 133 to 146 (NPEEGEPRAKFPFV).

The protein belongs to the PDGF/VEGF growth factor family. Snake venom VEGF subfamily. In terms of assembly, homodimer; disulfide-linked. Interacts with VEGF receptor-1 (FLT1) with a high affinity, whereas it binds to VEGF receptor-2 (KDR) with a low affinity. Does not bind VEGF receptor-3 (FLT4). In terms of tissue distribution, expressed by the venom gland.

Its subcellular location is the secreted. In terms of biological role, snake venom VEGFs that may contribute to venom dispersion and prey subjugation by inducing vascular permeability and hypotension. This protein induces an increase in capillary permeability after intradermal injection, as well as a drastic hypotensive effect after intravenous injection. The hypotension is mediated by nitric oxide (NO), which is produced by VEGF-activated endothelium NO synthase. Also induces angiogenesis in vitro. Like other crotalid VEGFs, this protein interacts with VEGF receptor-1 (FLT1) with a high affinity, whereas it binds to VEGF receptor-2 (KDR) with a low affinity. This chain is Snake venom vascular endothelial growth factor toxin, found in Bothrops jararaca (Jararaca).